The sequence spans 255 residues: Probable transcriptional regulatory protein CMM_1817 (255 aa).

The protein belongs to the TACO1 family.

The protein resides in the cytoplasm. The protein is Probable transcriptional regulatory protein CMM_1817 of Clavibacter michiganensis subsp. michiganensis (strain NCPPB 382).